We begin with the raw amino-acid sequence, 90 residues long: Putative membrane protein insertion efficiency factor (90 aa).

The disordered stretch occupies residues 68–90 (VPAHFSLRRNPQYKEEDHRGKKR). Over residues 79–90 (QYKEEDHRGKKR) the composition is skewed to basic and acidic residues.

The protein belongs to the UPF0161 family.

Its subcellular location is the cell membrane. Its function is as follows. Could be involved in insertion of integral membrane proteins into the membrane. The chain is Putative membrane protein insertion efficiency factor from Lactiplantibacillus plantarum (strain ATCC BAA-793 / NCIMB 8826 / WCFS1) (Lactobacillus plantarum).